Consider the following 118-residue polypeptide: Small ribosomal subunit protein uS13 (118 aa).

The segment at 94–118 (SLPLRGQRTKTNARTRKGPRKPIKR) is disordered.

The protein belongs to the universal ribosomal protein uS13 family. As to quaternary structure, part of the 30S ribosomal subunit. Forms a loose heterodimer with protein S19. Forms two bridges to the 50S subunit in the 70S ribosome.

Located at the top of the head of the 30S subunit, it contacts several helices of the 16S rRNA. In the 70S ribosome it contacts the 23S rRNA (bridge B1a) and protein L5 of the 50S subunit (bridge B1b), connecting the 2 subunits; these bridges are implicated in subunit movement. Contacts the tRNAs in the A and P-sites. This is Small ribosomal subunit protein uS13 from Pseudoalteromonas translucida (strain TAC 125).